A 328-amino-acid chain; its full sequence is Telomere-binding protein cav (328 aa).

The tract at residues 107–320 (RRKMVQPYPE…NISLQNSGSE (214 aa)) is required for binding to Su(var)205. Residues 139 to 228 (DRWQKQKSQN…EFQTEHTDCP (90 aa)) are disordered. Polar residues-rich tracts occupy residues 144–167 (QKSQNRSAPESSSALVGHASQQDS) and 180–189 (ANTNRYSVSQ). Short sequence motifs (su(var)205-binding Pro-containing repeat) lie at residues 228-232 (PETQM) and 281-287 (PETETNE). Residues 295 to 319 (INSESMSIGPSIDSEGNISLQNSGS) show a composition bias toward polar residues. The segment at 295 to 328 (INSESMSIGPSIDSEGNISLQNSGSEPIDVDSMA) is disordered.

In terms of assembly, interacts (via C-terminus) with Su(var)205 dimer (via hinge and chromoshadow domain) and with moi to form the terminin, telomere-capping, complex. Interacts with HP6, which is also part of the terminin complex.

It localises to the nucleus. It is found in the chromosome. The protein localises to the telomere. Functionally, binds to chromosome ends in a sequence-dependent manner and is required for telomere capping. The polypeptide is Telomere-binding protein cav (Drosophila erecta (Fruit fly)).